The sequence spans 175 residues: Large ribosomal subunit protein uL10 (175 aa).

The protein belongs to the universal ribosomal protein uL10 family. Part of the ribosomal stalk of the 50S ribosomal subunit. The N-terminus interacts with L11 and the large rRNA to form the base of the stalk. The C-terminus forms an elongated spine to which L12 dimers bind in a sequential fashion forming a multimeric L10(L12)X complex.

Forms part of the ribosomal stalk, playing a central role in the interaction of the ribosome with GTP-bound translation factors. This is Large ribosomal subunit protein uL10 from Synechococcus sp. (strain WH7803).